Here is a 288-residue protein sequence, read N- to C-terminus: Sulfur carrier protein FdhD (288 aa).

Catalysis depends on C122, which acts as the Cysteine persulfide intermediate. 268-273 (FVRGER) provides a ligand contact to Mo-bis(molybdopterin guanine dinucleotide).

Belongs to the FdhD family.

It localises to the cytoplasm. In terms of biological role, required for formate dehydrogenase (FDH) activity. Acts as a sulfur carrier protein that transfers sulfur from IscS to the molybdenum cofactor prior to its insertion into FDH. This chain is Sulfur carrier protein FdhD, found in Anaeromyxobacter sp. (strain K).